The following is a 156-amino-acid chain: Ribosomal RNA large subunit methyltransferase H (156 aa).

Residues leucine 73, glycine 104, and 123 to 128 (LSALTL) each bind S-adenosyl-L-methionine.

Belongs to the RNA methyltransferase RlmH family. As to quaternary structure, homodimer.

The protein resides in the cytoplasm. It catalyses the reaction pseudouridine(1915) in 23S rRNA + S-adenosyl-L-methionine = N(3)-methylpseudouridine(1915) in 23S rRNA + S-adenosyl-L-homocysteine + H(+). Functionally, specifically methylates the pseudouridine at position 1915 (m3Psi1915) in 23S rRNA. The polypeptide is Ribosomal RNA large subunit methyltransferase H (Shewanella sediminis (strain HAW-EB3)).